Consider the following 317-residue polypeptide: MYTKIIGTGSYLPEQVRTNADLEKMVDTSDEWIVTRTGIRERHIAAPNETVSTMGFEAATRAIEMAGIEKDQIGLIVVATTSATHAFPSAACQIQSMLGIKGCPAFDVAAACAGFTYALSVADQYVKSGAVKYALVVGSDVLARTCDPTDRGTIIIFGDGAGAAVLAASEEPGIISTHLHADGSYGELLTLPNADRVNPENSIHLTMAGNEVFKVAVTELAHIVDETLAANNLDRSQLDWLVPHQANLRIISATAKKLGMSMDNVVVTLDRHGNTSAASVPCALDEAVRDGRIKPGQLVLLEAFGGGFTWGSALVRF.

Catalysis depends on residues cysteine 112 and histidine 244. Residues 245–249 (QANLR) are ACP-binding. The active site involves asparagine 274.

Belongs to the thiolase-like superfamily. FabH family. In terms of assembly, homodimer.

Its subcellular location is the cytoplasm. The enzyme catalyses malonyl-[ACP] + acetyl-CoA + H(+) = 3-oxobutanoyl-[ACP] + CO2 + CoA. It functions in the pathway lipid metabolism; fatty acid biosynthesis. In terms of biological role, catalyzes the condensation reaction of fatty acid synthesis by the addition to an acyl acceptor of two carbons from malonyl-ACP. Catalyzes the first condensation reaction which initiates fatty acid synthesis and may therefore play a role in governing the total rate of fatty acid production. Possesses both acetoacetyl-ACP synthase and acetyl transacylase activities. Its substrate specificity determines the biosynthesis of branched-chain and/or straight-chain of fatty acids. The chain is Beta-ketoacyl-[acyl-carrier-protein] synthase III from Shigella sonnei (strain Ss046).